The chain runs to 459 residues: Inositol-trisphosphate 3-kinase A (459 aa).

A disordered region spans residues 1-29; the sequence is MTLPGRPTGMARPRGAGPCSPGLERAPRR. Residues Arg35, Arg55, and Arg62 each carry the omega-N-methylarginine modification. A disordered region spans residues 49 to 164; it reads AAAGEPRARG…TSEDVGQKSH (116 aa). The segment covering 116 to 132 has biased composition (low complexity); the sequence is RRLSTSSLSSTGSSSLL. A phosphoserine mark is found at Ser135 and Ser195. ATP contacts are provided by residues Ser195, Lys207, 247 to 249, and Asp260; that span reads QDL. The substrate site is built by Lys262 and Arg283. The interval 285-293 is calmodulin-binding; that stretch reads DMYKKMLAV. 310-317 serves as a coordination point for substrate; that stretch reads KPRYMQWR. Residues Lys334 and Asp414 each coordinate ATP. A substrate-binding site is contributed by Lys417.

The protein belongs to the inositol phosphokinase (IPK) family.

The protein localises to the cytoplasm. It is found in the cytoskeleton. The enzyme catalyses 1D-myo-inositol 1,4,5-trisphosphate + ATP = 1D-myo-inositol 1,3,4,5-tetrakisphosphate + ADP + H(+). Activated by calcium/calmodulin. In terms of biological role, catalyzes the phosphorylation of 1D-myo-inositol 1,4,5-trisphosphate (InsP3) into 1D-myo-inositol 1,3,4,5-tetrakisphosphate and participates to the regulation of calcium homeostasis. This is Inositol-trisphosphate 3-kinase A from Mus musculus (Mouse).